Consider the following 506-residue polypeptide: MEEFKRYFELDRYHQHDFLYPLIFQEYIYALAHDHGLNRSILLENAGYDNKSSLLIVKRLITRMYEQNHFLISVNDSNQNQFLGHNKNLSYQMISEGFSVIVEIPFSLRLISSLEGKEIVKSHNLRSIHSIFPFLEEKFLHLNYVLDILIPYPIHLEILVQTLRHWVKDASSLHLLRFFLHEYRNWNSLITPKKTSFFFSKRNERLFLFLYNSHVCEYESIFVFLRNQSSHLRSTSSGALLERIYFYGKIEHHVEVFAKDFQAMLWLFKDPFIHYVRYQGKSILASKGTSLLMNKWKYYLVNCWQCHFYVWSQPRSIYINQLSNHSLHFLGYLSSVRLNPSMVRSQMLENSYLIDNAIKKFDTIVPIIPLIGSLAKAKFCNVLGHPISKPVWADLSDSDIIDRFGRICRNLSHYHSGSSKKKSLYRIKYILRLSCARTLARKHKSTVRAFLKRVGSELLEEFFTEEEPVLSLTFPRASSTSRGLWLYRRRIWYLDIICINDLANPE.

The protein belongs to the intron maturase 2 family. MatK subfamily.

It is found in the plastid. The protein localises to the chloroplast. Usually encoded in the trnK tRNA gene intron. Probably assists in splicing its own and other chloroplast group II introns. The polypeptide is Maturase K (Hydrangea macrophylla (Bigleaf hydrangea)).